The following is a 425-amino-acid chain: Glutamate-1-semialdehyde 2,1-aminomutase (425 aa).

N6-(pyridoxal phosphate)lysine is present on Lys265.

The protein belongs to the class-III pyridoxal-phosphate-dependent aminotransferase family. HemL subfamily. In terms of assembly, homodimer. The cofactor is pyridoxal 5'-phosphate.

It localises to the cytoplasm. The catalysed reaction is (S)-4-amino-5-oxopentanoate = 5-aminolevulinate. Its pathway is porphyrin-containing compound metabolism; protoporphyrin-IX biosynthesis; 5-aminolevulinate from L-glutamyl-tRNA(Glu): step 2/2. The protein is Glutamate-1-semialdehyde 2,1-aminomutase of Opitutus terrae (strain DSM 11246 / JCM 15787 / PB90-1).